The sequence spans 880 residues: Protein transport protein SEC23 A (880 aa).

Residues methionine 1–glycine 13 show a composition bias toward polar residues. Residues methionine 1–proline 95 are disordered. Residues proline 20–proline 36 are compositionally biased toward pro residues. Residues methionine 57–proline 70 show a composition bias toward low complexity. Zn(2+) is bound by residues cysteine 204, cysteine 207, cysteine 226, and cysteine 229. Positions cysteine 204 to cysteine 229 are zinc finger-like.

The protein belongs to the SEC23/SEC24 family. SEC24 subfamily. In terms of assembly, component of the coat protein complex II (COPII), composed of at least five proteins: the Sec23/24 complex, the Sec13/31 complex and Sar1. In terms of tissue distribution, mostly expressed in seedlings, roots, cotyledons, leaves, trichomes, leaf primordia and flowers, and, to a lower extent, in mature siliques.

The protein localises to the cytoplasmic vesicle. The protein resides in the COPII-coated vesicle membrane. It localises to the endoplasmic reticulum membrane. Its subcellular location is the membrane. Component of the coat protein complex II (COPII) which promotes the formation of transport vesicles from the endoplasmic reticulum (ER). The coat has two main functions, the physical deformation of the endoplasmic reticulum membrane into vesicles and the selection of cargo molecules. May contribute to COPII-coated vesicles formation and ER-Golgi vesicle transport. Together with SEC23D, essential for pollen wall development and exine patterning, probably by regulating endoplasmic reticulum (ER) export of lipids and proteins (e.g. sporopollenin) necessary for pollen wall formation. Also involved in plastid physiology in anther tapetal cells. In Arabidopsis thaliana (Mouse-ear cress), this protein is Protein transport protein SEC23 A.